The sequence spans 213 residues: High frequency lysogenization protein HflD homolog (213 aa).

Residues 79 to 122 (QGLNAELTRYTLSLMVLERKLSSAKGALNTLGDRINGLQRQLDH) are a coiled coil.

The protein belongs to the HflD family.

The protein resides in the cytoplasm. Its subcellular location is the cell inner membrane. This Salmonella agona (strain SL483) protein is High frequency lysogenization protein HflD homolog.